A 182-amino-acid chain; its full sequence is Adenylate kinase (182 aa).

Residue 12–17 participates in ATP binding; that stretch reads GAGKGT. Residues 32–61 are NMP; the sequence is STGELLRKEIEMNTALGIQVKDIMNRGELV. AMP contacts are provided by residues Thr-33, Arg-38, 59 to 61, 85 to 88, and Gln-92; these read ELV and GYPR. The tract at residues 126-132 is LID; sequence LRGRKDD. Arg-127 contributes to the ATP binding site. AMP contacts are provided by Arg-129 and Arg-140. Residue Arg-168 participates in ATP binding.

Belongs to the adenylate kinase family. Monomer.

The protein resides in the cytoplasm. It carries out the reaction AMP + ATP = 2 ADP. The protein operates within purine metabolism; AMP biosynthesis via salvage pathway; AMP from ADP: step 1/1. Functionally, catalyzes the reversible transfer of the terminal phosphate group between ATP and AMP. Plays an important role in cellular energy homeostasis and in adenine nucleotide metabolism. This chain is Adenylate kinase, found in Prochlorococcus marinus (strain MIT 9301).